Reading from the N-terminus, the 567-residue chain is Proton-coupled zinc antiporter SLC30A9, mitochondrial (567 aa).

5 consecutive transmembrane segments (helical) span residues 238–258, 313–333, 341–361, 391–411, and 423–443; these read VVMV…LAWI, GVGI…MGLL, LLWA…TLLV, VILL…TCMG, and SLGS…LIYT. Residues 461 to 465 carry the LXXLL motif motif; sequence LTELL.

Belongs to the cation diffusion facilitator (CDF) transporter (TC 2.A.4) family. SLC30A subfamily. In terms of assembly, interacts with GRIP1, ESR1, AR and CTNNB1.

It is found in the mitochondrion membrane. It localises to the nucleus. The protein localises to the endoplasmic reticulum. It carries out the reaction Zn(2+)(in) + 2 H(+)(out) = Zn(2+)(out) + 2 H(+)(in). Acts as a zinc transporter involved in intracellular zinc homeostasis. Functions as a secondary coactivator for nuclear receptors by cooperating with p160 coactivators subtypes. Plays a role in transcriptional activation of Wnt-responsive genes. Its function is as follows. Mitochondrial proton-coupled zinc ion antiporter mediating the export of zinc from the mitochondria and involved in zinc homeostasis, zinc mobilization as well as mitochondrial morphology and health. In nucleus, functions as a secondary coactivator for nuclear receptors by cooperating with p160 coactivators subtypes. Plays a role in transcriptional activation of Wnt-responsive genes. The chain is Proton-coupled zinc antiporter SLC30A9, mitochondrial (Slc30a9) from Mus musculus (Mouse).